The following is a 190-amino-acid chain: A-type ATP synthase subunit E (190 aa).

The protein belongs to the V-ATPase E subunit family. Has multiple subunits with at least A(3), B(3), C, D, E, F, H, I and proteolipid K(x).

It localises to the cell membrane. In terms of biological role, component of the A-type ATP synthase that produces ATP from ADP in the presence of a proton gradient across the membrane. In Pyrobaculum neutrophilum (strain DSM 2338 / JCM 9278 / NBRC 100436 / V24Sta) (Thermoproteus neutrophilus), this protein is A-type ATP synthase subunit E.